Here is a 394-residue protein sequence, read N- to C-terminus: Na(+)/H(+) antiporter NhaA (394 aa).

Transmembrane regions (helical) follow at residues 14 to 34, 59 to 79, 95 to 115, 125 to 145, 154 to 174, 179 to 199, 213 to 233, 254 to 274, 292 to 312, 328 to 348, and 363 to 383; these read AGGL…NSAL, LLLW…GLEV, VFPA…YLLF, GWAI…ALLG, VFLL…IALF, VSLQ…YMNW, LVLW…GVIV, GLHP…NAGV, IATG…WLAV, IFAV…IASL, and LGIL…LRLV.

The protein belongs to the NhaA Na(+)/H(+) (TC 2.A.33) antiporter family.

It is found in the cell inner membrane. The enzyme catalyses Na(+)(in) + 2 H(+)(out) = Na(+)(out) + 2 H(+)(in). Functionally, na(+)/H(+) antiporter that extrudes sodium in exchange for external protons. This Yersinia pestis bv. Antiqua (strain Antiqua) protein is Na(+)/H(+) antiporter NhaA.